We begin with the raw amino-acid sequence, 274 residues long: Nitrogenase iron protein (274 aa).

Residue Gly-8 to Ser-15 coordinates ATP. Cys-94 is a [4Fe-4S] cluster binding site. Position 97 is an ADP-ribosylarginine; by dinitrogenase reductase ADP-ribosyltransferase (Arg-97). Cys-129 contacts [4Fe-4S] cluster.

It belongs to the NifH/BchL/ChlL family. As to quaternary structure, homodimer. The cofactor is [4Fe-4S] cluster. Post-translationally, the reversible ADP-ribosylation of Arg-97 inactivates the nitrogenase reductase and regulates nitrogenase activity.

It catalyses the reaction N2 + 8 reduced [2Fe-2S]-[ferredoxin] + 16 ATP + 16 H2O = H2 + 8 oxidized [2Fe-2S]-[ferredoxin] + 2 NH4(+) + 16 ADP + 16 phosphate + 6 H(+). The key enzymatic reactions in nitrogen fixation are catalyzed by the nitrogenase complex, which has 2 components: the iron protein and the molybdenum-iron protein. The protein is Nitrogenase iron protein of Methanocella arvoryzae (strain DSM 22066 / NBRC 105507 / MRE50).